The primary structure comprises 968 residues: MSKAELKDFTFKSRHIGPTNEDEALMLQHLGYENSEEFISSVIPNEIFDSENNVVSIPDGCDQNKALKEINIISKKNVEHRSLIGLGYHSTVIPPVIQRNVLENPNWYTAYTPYQAEISQGRLEALFNFQTLISELTGLPISNASLLDEATAAAEAISLSLAVRKNKNANKFLVDQEILPQTFDVLKTRCEPLGISLEMFENNNFEIDKNIFGILIQLPGKNGRIWDPTKIINDAHKCNAIVTIAIDPLAQVLIKPMGEFGADIVVGSAQRFGVPIACGGPHAAFFATKEIYKRQIPGRIVGQSVDVEGNQALRLALQTREQHIRRDKATSNICTAQVLLAVLSSFYAVHHGPKGLKQIAENVVKYRSNFESILMNLEYPIEKYSAFDSVDVYCSEASEVIQLASEEGYNFRVLPIGSDFENAKGFGVTFDELTCDEEIYTLHQILAQVKGKKAHDLSNFLNENASLVDIPLREKSWLEQSVFNQYQSETDLMRYIHSLVSKDFSLVQGMIPLGSCTMKLNSAAELLPIEWREFSSIHPFAPHAQLAGFHEIINDLENWLSALTGFQGVSLQPNAGSQGEFAGLLVIRSWHQSLGEGHRNICLIPTSAHGTNPASAVMSGFKVVSVKCDEYGNVDLEDLKNKSKIHSKNLAALMVTYPSTHGVFEPNIREMCQVIHQEGGQVYLDGANLNAQVGICRPGSYGIDVCHLNLHKTFSIPHGGGGPGVGPIAVADHLVPYLPGHSIIKCGGEKAISAVSAAPFGSAGILPISWMYIRMMGSDGLRKASSIAILSANYLAKRLDPYYPVLFKDPNGLVAHECILDLRPLKSQLGIEVEDVAKRLMDYGFHAPTISWPVAGTLMVEPTESESLPELDRFCDAMIGIREEIEQIKLGKIDPINNPLKQSPHTLKRVTSDDWDRPYSRKEAAYPLPDQEKYKFWPSVSRINNAYGDRNLICSCPSVQDLEDINSV.

Lys-712 bears the N6-(pyridoxal phosphate)lysine mark.

It belongs to the GcvP family. As to quaternary structure, the glycine cleavage system is composed of four proteins: P, T, L and H. The cofactor is pyridoxal 5'-phosphate.

The catalysed reaction is N(6)-[(R)-lipoyl]-L-lysyl-[glycine-cleavage complex H protein] + glycine + H(+) = N(6)-[(R)-S(8)-aminomethyldihydrolipoyl]-L-lysyl-[glycine-cleavage complex H protein] + CO2. Its function is as follows. The glycine cleavage system catalyzes the degradation of glycine. The P protein binds the alpha-amino group of glycine through its pyridoxal phosphate cofactor; CO(2) is released and the remaining methylamine moiety is then transferred to the lipoamide cofactor of the H protein. The protein is Glycine dehydrogenase (decarboxylating) of Prochlorococcus marinus (strain NATL1A).